Here is a 393-residue protein sequence, read N- to C-terminus: Chorismate synthase (393 aa).

NADP(+) is bound by residues R40 and R46. Residues 129–131, 249–250, G301, 316–320, and R342 each bind FMN; these read RSS, QA, and KPIPT.

Belongs to the chorismate synthase family. As to quaternary structure, homotetramer. Requires FMNH2 as cofactor.

It catalyses the reaction 5-O-(1-carboxyvinyl)-3-phosphoshikimate = chorismate + phosphate. It participates in metabolic intermediate biosynthesis; chorismate biosynthesis; chorismate from D-erythrose 4-phosphate and phosphoenolpyruvate: step 7/7. In terms of biological role, catalyzes the anti-1,4-elimination of the C-3 phosphate and the C-6 proR hydrogen from 5-enolpyruvylshikimate-3-phosphate (EPSP) to yield chorismate, which is the branch point compound that serves as the starting substrate for the three terminal pathways of aromatic amino acid biosynthesis. This reaction introduces a second double bond into the aromatic ring system. This chain is Chorismate synthase, found in Geotalea uraniireducens (strain Rf4) (Geobacter uraniireducens).